The sequence spans 378 residues: MRSLDAARDTCERLHPGLIKALEELPLLEREAEGSPVLDIFRAHGGAGLLVPSAYGGHGADALDAVRVTRALGACSPSLAAAATMHNFTAAMLFALTDRVIPPTDEQKKLLARVAPEGMLLASGWAEGRTQQDILNPSVKATPVDDGFILNGSKKPCSLSRSMDILTASVILPDETGQQSLAVPLIMADSPGISVHPFWESPVLAGSQSNEVRLKDVHVPEKLIIRGTPDDPGRLDDLQTATFVWFELLITSAYVGAASALTELVMERDRGSVTDRAALGIQLESAVGLTEGVARAVRDGVFGEEAVAAALTARFAVQKTLAAISDQAIELLGGIAFIKSPELAYLSSALHPLAFHPPGRTSSSPHLVEYFSGGPLEI.

In terms of assembly, exists in dimeric or trimeric form depending upon buffer conditions. It can form an isobutylamine N-hydroxylase two component enzyme system formed of a flavin reductase component (VlmR) and a monooxygenase component (VlmH).

The enzyme catalyses 2-methylpropan-1-amine + FADH2 + O2 = N-(2-methylpropyl)hydroxylamine + FAD + H2O + 2 H(+). It carries out the reaction 2-methylpropan-1-amine + FMNH2 + O2 = N-(2-methylpropyl)hydroxylamine + FMN + H2O + 2 H(+). Its activity is regulated as follows. Inhibited by 5',5'-dithio-bis(2-nitrobenzoic acid) (DTNB) and 4-(hydroxymercuri)benzoic acid (p-HMB). Functionally, involved in the biosynthesis of the azoxy antibiotic valanimycin, which has an antitumor activity. Catalyzes the oxidation of isobutylamine to isobutylhydroxylamine via the formation of a flavin 4a-hydroperoxide. Unlike other known N-hydroxylases, isobutylamine N-hydroxylase cannot carry out the reduction of the flavin cofactor and requires the NADPH-flavin oxidoreductase VlmR. Also able to oxidize propan-1-amine, butan-1-amine, butan-2-amine and benzylamine. It has a similar activity with either FMNH(2) or FADH(2). This chain is Isobutylamine N-hydroxylase, found in Streptomyces viridifaciens.